Consider the following 205-residue polypeptide: Adenylyl-sulfate kinase (205 aa).

31 to 38 (GLSGAGKS) provides a ligand contact to ATP. Serine 105 functions as the Phosphoserine intermediate in the catalytic mechanism.

The protein belongs to the APS kinase family.

The catalysed reaction is adenosine 5'-phosphosulfate + ATP = 3'-phosphoadenylyl sulfate + ADP + H(+). Its pathway is sulfur metabolism; hydrogen sulfide biosynthesis; sulfite from sulfate: step 2/3. Catalyzes the synthesis of activated sulfate. In Shewanella oneidensis (strain ATCC 700550 / JCM 31522 / CIP 106686 / LMG 19005 / NCIMB 14063 / MR-1), this protein is Adenylyl-sulfate kinase.